We begin with the raw amino-acid sequence, 186 residues long: Membrane protein Rv1476 (186 aa).

A helical transmembrane segment spans residues 138-158 (FPWSALTIVLLIGVLAAAVGA). The segment at 166–186 (RRSATSTDAAPGAGDDLNQGV) is disordered.

It localises to the membrane. May affect the expression of genes linked to host macrophage apoptosis and immune response, thereby promoting the survival of M.tuberculosis in host macrophages. Overexpression of the gene increases susceptibility of the bacteria to various stresses, but promotes intracellular survival in host macrophages. It has no impact on the growth rate in vitro. Overexpression causes changes in the transcriptome of THP-1 cells, including expression of genes involved in cell proliferation, fatty acid degradation, cytokine-cytokine receptor interaction and immune response pathways. The protein is Membrane protein Rv1476 of Mycobacterium tuberculosis (strain ATCC 25618 / H37Rv).